The chain runs to 532 residues: Omega-hydroxyceramide transacylase (532 aa).

The region spanning 16–185 (ISFSGSGFLS…TGMQPCAFWT (170 aa)) is the PNPLA domain. The short motif at 51–55 (GTSAG) is the GXSXG element. S53 acts as the Nucleophile in catalysis. The active-site Proton acceptor is the D172. The DGA/G signature appears at 172–174 (DGG). Disordered stretches follow at residues 290-457 (PERS…ELGQ) and 489-532 (VTES…SKVQ). Basic and acidic residues predominate over residues 310 to 322 (PHKEWVPKGDGRG). 2 stretches are compositionally biased toward low complexity: residues 380 to 389 (PPSSTPGSSL) and 397 to 411 (SPLS…SGSP). Positions 517-532 (GFPRHSGSKKPSSKVQ) are enriched in basic residues.

In terms of tissue distribution, expressed in the digestive system. Expressed in the epidermis of skin keratinocytes. Strongly expressed in the granular layer. Expressed in the upper epidermis and eccrine sweat glands of the dermis and in the region of keratin filament bundles, which is more pronounced in upper epidermal layers and in the lower cornified layers.

It localises to the cytoplasm. It catalyses the reaction an N-(omega-hydroxy-ultra-long chain fatty acyl)-sphingoid base + a (9Z,12Z)-octadecadienoyl-containing triacyl-sn-glycerol = an N-[omega-(9Z,12Z-octadecadienoyloxy)-O-ultra-long chain fatty acyl]-sphingoid base + a diacylglycerol. It carries out the reaction an N-(omega-hydroxy-ultra-long chain fatty acyl)-sphing-4-enine + a (9Z,12Z)-octadecadienoyl-containing triacyl-sn-glycerol = an N-(omega-(9Z,12Z-octadecadienoyloxy)-ultra-long chain fatty acyl)-sphing-4-enine + a diacylglycerol. The catalysed reaction is N-(30-hydroxytriacontanoyl)-sphing-4-enine + 1,2,3-tri-(9Z,12Z)-octadecadienoylglycerol = N-[30-(9Z,12Z-octadecadienoyloxy)-triacontanoyl]-sphing-4-enine + di-(9Z,12Z)-octadecadienoylglycerol. The enzyme catalyses N-(28-hydroxyoctacosanoyl)-sphing-4-enine + a (9Z,12Z)-octadecadienoyl-containing triacyl-sn-glycerol = N-(28-(9Z,12Z-octadecadienoyloxy)-octacosanoyl)-sphing-4-enine + a diacylglycerol. It catalyses the reaction N-(32-hydroxydotriacontanoyl)-sphing-4-enine + a (9Z,12Z)-octadecadienoyl-containing triacyl-sn-glycerol = N-(32-(9Z,12Z-octadecadienoyloxy)-dotricontanoyl)-sphing-4-enine + a diacylglycerol. It carries out the reaction N-(32-hydroxydotriacontenoyl)-sphing-4-enine + a (9Z,12Z)-octadecadienoyl-containing triacyl-sn-glycerol = an N-(32-(9Z,12Z-octadecadienoyloxy)-dotriacontenoyl)-sphing-4-enine + a diacylglycerol. The catalysed reaction is an N-(34-hydroxytetratriacontenoyl)-sphing-4-enine + a (9Z,12Z)-octadecadienoyl-containing triacyl-sn-glycerol = an N-(34-(9Z,12Z-octadecadienoyloxy)-tetratriacontenoyl)-sphing-4-enine + a diacylglycerol. The enzyme catalyses an N-(34-hydroxytetratriacontadienoyl)-sphing-4-enine + a (9Z,12Z)-octadecadienoyl-containing triacyl-sn-glycerol = an N-(34-(9Z,12Z-octadecadienoyloxy)-tetratriacontadienoyl)-sphing-4-enine + a diacylglycerol. It catalyses the reaction an N-(36-hydroxyhexatriacontenoyl)-sphing-4-enine + a (9Z,12Z)-octadecadienoyl-containing triacyl-sn-glycerol = an N-(36-(9Z,12Z-octadecadienoyloxy)-hexatriacontenoyl)-sphing-4-enine + a diacylglycerol. It carries out the reaction an N-(36-hydroxyhexatriacontadienoyl)-sphing-4-enine + a (9Z,12Z)-octadecadienoyl-containing triacyl-sn-glycerol = an N-(36-(9Z,12Z-octadecadienoyloxy)-hexatriacontadienoyl)-sphing-4-enine + a diacylglycerol. The catalysed reaction is an N-(38-hydroxyoctatriacontenoyl)-sphing-4-enine + a (9Z,12Z)-octadecadienoyl-containing triacyl-sn-glycerol = an N-(38-(9Z,12Z-octadecadienoyloxy)-octatriacontenoyl)-sphing-4-enine + a diacylglycerol. Functionally, omega-hydroxyceramide transacylase involved in the synthesis of omega-O-acylceramides (esterified omega-hydroxyacyl-sphingosine; EOS), which are extremely hydrophobic lipids involved in skin barrier formation. Catalyzes the last step of the synthesis of omega-O-acylceramides by transferring linoleic acid from triglycerides to an omega-hydroxyceramide. Omega-O-acylceramides, are required for the biogenesis of lipid lamellae in the stratum corneum and the formation of the cornified lipid envelope which are essential for the epidermis barrier function. These lipids also play a role in keratinocyte differentiation. May also act on omega-hydroxylated ultra-long chain fatty acids (omega-OH ULCFA) and acylglucosylceramides (GlcEOS). This is Omega-hydroxyceramide transacylase from Homo sapiens (Human).